The chain runs to 183 residues: dCTP deaminase (183 aa).

Residues 106 to 111 (KSTYAR), 130 to 132 (TLE), Q151, Y165, and Q175 each bind dCTP. Residue E132 is the Proton donor/acceptor of the active site.

It belongs to the dCTP deaminase family. In terms of assembly, homotrimer.

It carries out the reaction dCTP + H2O + H(+) = dUTP + NH4(+). The protein operates within pyrimidine metabolism; dUMP biosynthesis; dUMP from dCTP (dUTP route): step 1/2. Its function is as follows. Catalyzes the deamination of dCTP to dUTP. The sequence is that of dCTP deaminase from Acidobacterium capsulatum (strain ATCC 51196 / DSM 11244 / BCRC 80197 / JCM 7670 / NBRC 15755 / NCIMB 13165 / 161).